Reading from the N-terminus, the 132-residue chain is Small ribosomal subunit protein uS8 (132 aa).

It belongs to the universal ribosomal protein uS8 family. Part of the 30S ribosomal subunit. Contacts proteins S5 and S12.

In terms of biological role, one of the primary rRNA binding proteins, it binds directly to 16S rRNA central domain where it helps coordinate assembly of the platform of the 30S subunit. The polypeptide is Small ribosomal subunit protein uS8 (Exiguobacterium sp. (strain ATCC BAA-1283 / AT1b)).